Reading from the N-terminus, the 901-residue chain is Modifier of cell death (901 aa).

2 disordered regions span residues 147 to 169 and 218 to 245; these read AQKR…PRAA and PRKS…SPSP. Residues 259–282 form a C2H2-type zinc finger; it reads FKCAECGDGFPVMDRLCDHMIKQH. Disordered stretches follow at residues 494–528, 682–717, and 779–901; these read KKEH…DDVP, QERV…SHEE, and HKAI…WDDN. The span at 817–828 shows a compositional bias: low complexity; it reads EAAAKLIQAENE. A compositionally biased stretch (acidic residues) spans 829 to 840; that stretch reads MVVEEEEVEEPP. A compositionally biased stretch (basic and acidic residues) spans 846 to 866; it reads QVPKEKEVEVAEAEKLPEQVK.

Its function is as follows. Promotes programmed cell death. Its role in programmed cell death may be in conjunction with cell cycle regulatory factor efl-1 and the synthetic multivulva class B proteins dpl-1 and lin-35, and is independent of the ced-1, ced-8 and ced-9 pathways. In Caenorhabditis elegans, this protein is Modifier of cell death.